Here is a 38-residue protein sequence, read N- to C-terminus: Large ribosomal subunit protein bL36 (38 aa).

This sequence belongs to the bacterial ribosomal protein bL36 family.

The sequence is that of Large ribosomal subunit protein bL36 from Hahella chejuensis (strain KCTC 2396).